The chain runs to 76 residues: DNA gyrase inhibitor YacG (76 aa).

The Zn(2+) site is built by C20, C23, C39, and C43. The segment at 54–76 (EEKSIPGAPDLSDSDGWSDDMGY) is disordered. The span at 65-76 (SDSDGWSDDMGY) shows a compositional bias: acidic residues.

The protein belongs to the DNA gyrase inhibitor YacG family. As to quaternary structure, interacts with GyrB. Zn(2+) serves as cofactor.

Functionally, inhibits all the catalytic activities of DNA gyrase by preventing its interaction with DNA. Acts by binding directly to the C-terminal domain of GyrB, which probably disrupts DNA binding by the gyrase. The polypeptide is DNA gyrase inhibitor YacG (Photobacterium profundum (strain SS9)).